We begin with the raw amino-acid sequence, 409 residues long: CUB domain-containing protein (409 aa).

Positions 1-18 (MFLFSLTVLSALVLITES) are cleaved as a signal peptide. Residues 154–229 (TEASTTAQET…TTAPTTAPAP (76 aa)) are compositionally biased toward low complexity. The segment at 154–230 (TEASTTAQET…TAPTTAPAPI (77 aa)) is disordered. Cys232 and Cys257 are oxidised to a cystine. The 107-residue stretch at 232–338 (CGGVLRGRGT…QEYVDYYYYD (107 aa)) folds into the CUB domain. The interval 389–409 (VQGAADSESEASASSESSDED) is disordered. The span at 392–409 (AADSESEASASSESSDED) shows a compositional bias: low complexity.

Component of the acid-insoluble and acid-soluble organic matrix of the aragonitic skeleton (at protein level).

It is found in the secreted. In Acropora millepora (Staghorn coral), this protein is CUB domain-containing protein.